Reading from the N-terminus, the 399-residue chain is Tyrosine--tRNA ligase (399 aa).

The 'HIGH' region signature appears at 42–51 (PTAPDLHLGH). Positions 226-230 (KMSKS) match the 'KMSKS' region motif. Lysine 229 contributes to the ATP binding site. The S4 RNA-binding domain maps to 336-396 (MPIAAVLNKA…GKKAFARITL (61 aa)).

The protein belongs to the class-I aminoacyl-tRNA synthetase family. TyrS type 2 subfamily. Homodimer.

It is found in the cytoplasm. It carries out the reaction tRNA(Tyr) + L-tyrosine + ATP = L-tyrosyl-tRNA(Tyr) + AMP + diphosphate + H(+). Its function is as follows. Catalyzes the attachment of tyrosine to tRNA(Tyr) in a two-step reaction: tyrosine is first activated by ATP to form Tyr-AMP and then transferred to the acceptor end of tRNA(Tyr). This is Tyrosine--tRNA ligase from Pseudomonas fluorescens (strain Pf0-1).